A 305-amino-acid chain; its full sequence is Ornithine carbamoyltransferase (305 aa).

Carbamoyl phosphate is bound by residues 50–53, Q77, R101, and 128–131; these read STRT and HPCQ. L-ornithine is bound by residues N162, D220, and 224 to 225; that span reads SM. Residues 260–261 and R288 contribute to the carbamoyl phosphate site; that span reads CL.

It belongs to the aspartate/ornithine carbamoyltransferase superfamily. OTCase family.

It is found in the cytoplasm. The enzyme catalyses carbamoyl phosphate + L-ornithine = L-citrulline + phosphate + H(+). It participates in amino-acid degradation; L-arginine degradation via ADI pathway; carbamoyl phosphate from L-arginine: step 2/2. Functionally, reversibly catalyzes the transfer of the carbamoyl group from carbamoyl phosphate (CP) to the N(epsilon) atom of ornithine (ORN) to produce L-citrulline. This Akkermansia muciniphila (strain ATCC BAA-835 / DSM 22959 / JCM 33894 / BCRC 81048 / CCUG 64013 / CIP 107961 / Muc) protein is Ornithine carbamoyltransferase.